The following is a 329-amino-acid chain: Phenylalanine--tRNA ligase alpha subunit (329 aa).

Glu253 contributes to the Mg(2+) binding site.

The protein belongs to the class-II aminoacyl-tRNA synthetase family. Phe-tRNA synthetase alpha subunit type 1 subfamily. Tetramer of two alpha and two beta subunits. Mg(2+) serves as cofactor.

It is found in the cytoplasm. The catalysed reaction is tRNA(Phe) + L-phenylalanine + ATP = L-phenylalanyl-tRNA(Phe) + AMP + diphosphate + H(+). The sequence is that of Phenylalanine--tRNA ligase alpha subunit from Teredinibacter turnerae (strain ATCC 39867 / T7901).